An 86-amino-acid chain; its full sequence is Apolipoprotein C-I (86 aa).

The signal sequence occupies residues 1–26 (MRLFLSLPVLVVVLLMILEGPGPAQG).

Belongs to the apolipoprotein C1 family.

It is found in the secreted. Functionally, inhibitor of lipoprotein binding to the low density lipoprotein (LDL) receptor, LDL receptor-related protein, and very low density lipoprotein (VLDL) receptor. Associates with high density lipoproteins (HDL) and the triacylglycerol-rich lipoproteins in the plasma and makes up about 10% of the protein of the VLDL and 2% of that of HDL. Appears to interfere directly with fatty acid uptake and is also the major plasma inhibitor of cholesteryl ester transfer protein (CETP). Binds free fatty acids and reduces their intracellular esterification. Modulates the interaction of APOE with beta-migrating VLDL and inhibits binding of beta-VLDL to the LDL receptor-related protein. This Ateles geoffroyi (Black-handed spider monkey) protein is Apolipoprotein C-I (APOC1).